Reading from the N-terminus, the 138-residue chain is MTATNQKVAHMKKAIATAAIALAAGLGLVGCTSDADVASENLSKAADNFEIPRRIVFFNGITDKYLLEIQGRCSIEPDTGAQKLDVTCKQNGQFKKHFLGLSDNVTYFVEQIEGANVSDDFYQVNFKPQSILPDIELR.

This is Gene 64 protein (64) from Mycobacterium (Mycobacteriophage D29).